The primary structure comprises 278 residues: Ribonuclease HII (278 aa).

In terms of domain architecture, RNase H type-2 spans 71 to 259; the sequence is WPVAGCDEAG…VAAAWDKHAP (189 aa). Positions 77, 78, and 168 each coordinate a divalent metal cation.

This sequence belongs to the RNase HII family. Mn(2+) serves as cofactor. It depends on Mg(2+) as a cofactor.

The protein resides in the cytoplasm. The catalysed reaction is Endonucleolytic cleavage to 5'-phosphomonoester.. In terms of biological role, endonuclease that specifically degrades the RNA of RNA-DNA hybrids. In Rhodopseudomonas palustris (strain BisA53), this protein is Ribonuclease HII.